The primary structure comprises 64 residues: Prokaryotic ubiquitin-like protein Pup (64 aa).

The segment at 1-37 (MAQEQTQRAGGGEDDETTGGDGSAGQERREKLAAETD) is disordered. The segment at 21 to 58 (DGSAGQERREKLAAETDDLLDEIDDVLEENAEDFVRAY) is ARC ATPase binding. Residues 24–52 (AGQERREKLAAETDDLLDEIDDVLEENAE) are a coiled coil. A Deamidated glutamine modification is found at glutamine 64. Glutamine 64 participates in a covalent cross-link: Isoglutamyl lysine isopeptide (Gln-Lys) (interchain with K-? in acceptor proteins).

Belongs to the prokaryotic ubiquitin-like protein family. As to quaternary structure, strongly interacts with the proteasome-associated ATPase ARC through a hydrophobic interface; the interacting region of Pup lies in its C-terminal half. There is one Pup binding site per ARC hexamer ring. Is modified by deamidation of its C-terminal glutamine to glutamate by the deamidase Dop, a prerequisite to the subsequent pupylation process.

Its pathway is protein degradation; proteasomal Pup-dependent pathway. In terms of biological role, protein modifier that is covalently attached to lysine residues of substrate proteins, thereby targeting them for proteasomal degradation. The tagging system is termed pupylation. This chain is Prokaryotic ubiquitin-like protein Pup, found in Rhodococcus erythropolis (strain PR4 / NBRC 100887).